The primary structure comprises 619 residues: Hypermethylated in cancer 2 protein (619 aa).

One can recognise a BTB domain in the interval 46 to 109; it reads CDVIIMVENS…IYTGKLLPSD (64 aa). Ser166, Ser169, and Ser197 each carry phosphoserine. Disordered stretches follow at residues 180 to 293 and 307 to 426; these read DVRK…VGNS and MDVE…GHTG. Residues 214–228 are compositionally biased toward gly residues; it reads LGLGGPAGGEMGLGG. A binding to CtBP region spans residues 247 to 249; it reads DLS. Over residues 281–293 the composition is skewed to polar residues; it reads APTSTSALPVGNS. Basic and acidic residues predominate over residues 337 to 357; it reads KKDWNKKEPVAGSPFDRRETG. Ser349 and Ser416 each carry phosphoserine. 5 consecutive C2H2-type zinc fingers follow at residues 446 to 468, 509 to 531, 537 to 559, 565 to 587, and 593 to 615; these read YVCIPCAKGFPSSEQLNAHVETH, FKCSVCEKTYKDPATLRQHEKTH, FPCNICGKMFTQRGTMTRHMRSH, FACDECGMRFTRQYRLTEHMRVH, and YECQLCGGKFTQQRNLISHLRMH.

It belongs to the krueppel C2H2-type zinc-finger protein family. Hic subfamily. In terms of assembly, self-associates. Interacts with HIC1.

It is found in the nucleus. Functionally, transcriptional repressor. This is Hypermethylated in cancer 2 protein (Hic2) from Mus musculus (Mouse).